A 282-amino-acid polypeptide reads, in one-letter code: MQIFTTPQQLAAQCRAWHAAGDDIALVPTMGYYHAGHEDLMAHGRTLAKRLVVSLFVNPAQFGPGEDLAAYPRDAERDTAIAASHGADAIFMPEPGSMYEADHATWVEVPDLARGLCGQSRPTHFRGVCTVVLKLFMLSAADVAVFGQKDWQQQAIIKRMVRDLNLPVRIETRPTVREADGLALSSRNVYLSPEERAQAPQIRQALLHAQKLAQEGAGSATLLREAVLRRWAELLPLGRLDYLTIVHPESLEPLDEVVGPALMACAVRMGKARLIDNILLHS.

Position 30 to 37 (30 to 37 (MGYYHAGH)) interacts with ATP. The Proton donor role is filled by H37. Position 61 (Q61) interacts with (R)-pantoate. Q61 contacts beta-alanine. ATP is bound at residue 147 to 150 (GQKD). Q153 is a (R)-pantoate binding site. ATP is bound by residues V176 and 184–187 (LSSR).

The protein belongs to the pantothenate synthetase family. As to quaternary structure, homodimer.

It is found in the cytoplasm. The catalysed reaction is (R)-pantoate + beta-alanine + ATP = (R)-pantothenate + AMP + diphosphate + H(+). The protein operates within cofactor biosynthesis; (R)-pantothenate biosynthesis; (R)-pantothenate from (R)-pantoate and beta-alanine: step 1/1. In terms of biological role, catalyzes the condensation of pantoate with beta-alanine in an ATP-dependent reaction via a pantoyl-adenylate intermediate. This chain is Pantothenate synthetase, found in Desulfovibrio desulfuricans (strain ATCC 27774 / DSM 6949 / MB).